The primary structure comprises 208 residues: Phosphoribosyl-dephospho-CoA transferase (208 aa).

Residues Asp133 and Asp135 contribute to the active site.

The protein belongs to the MdcG family.

It catalyses the reaction apo-[malonate decarboxylase ACP] + 2'-(5''-triphospho-alpha-D-ribosyl)-3'-dephospho-CoA = holo-[malonate decarboxylase ACP] + diphosphate. Transfers 2'-(5-triphosphoribosyl)-3'-dephosphocoenzyme-A to the apo-[acyl-carrier-protein] of the malonate decarboxylase to yield holo-[acyl-carrier-protein]. The chain is Phosphoribosyl-dephospho-CoA transferase from Pseudomonas fluorescens (strain ATCC BAA-477 / NRRL B-23932 / Pf-5).